Reading from the N-terminus, the 375-residue chain is 23S rRNA (uracil(747)-C(5))-methyltransferase RlmC (375 aa).

[4Fe-4S] cluster contacts are provided by cysteine 3, cysteine 11, cysteine 14, and cysteine 87. Positions 212, 241, 262, and 307 each coordinate S-adenosyl-L-methionine. The active-site Nucleophile is the cysteine 334.

The protein belongs to the class I-like SAM-binding methyltransferase superfamily. RNA M5U methyltransferase family. RlmC subfamily.

It carries out the reaction uridine(747) in 23S rRNA + S-adenosyl-L-methionine = 5-methyluridine(747) in 23S rRNA + S-adenosyl-L-homocysteine + H(+). Catalyzes the formation of 5-methyl-uridine at position 747 (m5U747) in 23S rRNA. The sequence is that of 23S rRNA (uracil(747)-C(5))-methyltransferase RlmC from Escherichia coli (strain SE11).